A 614-amino-acid chain; its full sequence is Major facilitator superfamily domain-containing protein 6-like protein B (614 aa).

A run of 2 helical transmembrane segments spans residues 41-61 and 78-98; these read LGLG…VHLL and FFIM…AFYP. A compositionally biased stretch (polar residues) spans 177–191; sequence HQRFTDQFPSSSPLT. A disordered region spans residues 177–243; that stretch reads HQRFTDQFPS…PFATHPNVSH (67 aa). Low complexity predominate over residues 205-227; it reads GSGKAQKANSSKSSASNSKQRSS. Transmembrane regions (helical) follow at residues 270–290, 312–332, 345–365, 393–413, 425–445, 457–477, 480–500, 520–540, and 546–566; these read IFLI…PLEW, LWIW…FLID, VSFH…LSTL, IVLT…IQNF, ELYM…LYFF, WMVV…SFLW, WSVV…WWAI, LRWL…GFII, and AVLY…FLLV.

Belongs to the major facilitator superfamily. MFSD6 family.

The protein localises to the membrane. The polypeptide is Major facilitator superfamily domain-containing protein 6-like protein B (mfsd6l-b) (Xenopus laevis (African clawed frog)).